The primary structure comprises 353 residues: Photosystem II D2 protein (353 aa).

An N-acetylthreonine modification is found at Thr-2. A Phosphothreonine modification is found at Thr-2. The helical transmembrane segment at 41-61 (CAYFALGGWLTGTTFVTSWYT) threads the bilayer. Residue His-118 participates in chlorophyll a binding. The chain crosses the membrane as a helical span at residues 125 to 141 (GFMLRQFELARSVQLRP). The pheophytin a site is built by Gln-130 and Asn-143. A helical membrane pass occupies residues 153-166 (VFVSVFLIYPLGQS). Position 198 (His-198) interacts with chlorophyll a. A helical transmembrane segment spans residues 208–228 (AALLCAIHGATVENTLFEDGD). Residues His-215 and Phe-262 each coordinate a plastoquinone. A Fe cation-binding site is contributed by His-215. Fe cation is bound at residue His-269. Residues 279-295 (GLWMSAIGVVGLALNLR) traverse the membrane as a helical segment.

This sequence belongs to the reaction center PufL/M/PsbA/D family. In terms of assembly, PSII is composed of 1 copy each of membrane proteins PsbA, PsbB, PsbC, PsbD, PsbE, PsbF, PsbH, PsbI, PsbJ, PsbK, PsbL, PsbM, PsbT, PsbX, PsbY, PsbZ, Psb30/Ycf12, at least 3 peripheral proteins of the oxygen-evolving complex and a large number of cofactors. It forms dimeric complexes. The cofactor is The D1/D2 heterodimer binds P680, chlorophylls that are the primary electron donor of PSII, and subsequent electron acceptors. It shares a non-heme iron and each subunit binds pheophytin, quinone, additional chlorophylls, carotenoids and lipids. There is also a Cl(-1) ion associated with D1 and D2, which is required for oxygen evolution. The PSII complex binds additional chlorophylls, carotenoids and specific lipids..

The protein localises to the plastid. Its subcellular location is the chloroplast thylakoid membrane. It catalyses the reaction 2 a plastoquinone + 4 hnu + 2 H2O = 2 a plastoquinol + O2. Functionally, photosystem II (PSII) is a light-driven water:plastoquinone oxidoreductase that uses light energy to abstract electrons from H(2)O, generating O(2) and a proton gradient subsequently used for ATP formation. It consists of a core antenna complex that captures photons, and an electron transfer chain that converts photonic excitation into a charge separation. The D1/D2 (PsbA/PsbD) reaction center heterodimer binds P680, the primary electron donor of PSII as well as several subsequent electron acceptors. D2 is needed for assembly of a stable PSII complex. This is Photosystem II D2 protein from Zygnema circumcarinatum (Green alga).